A 377-amino-acid chain; its full sequence is Oleosin-B4 (377 aa).

The interval 1–37 is polar; that stretch reads MRNEIQNETAQTDQTQGSMFSFFNLFPFLLPMFEVIK. A run of 3 helical transmembrane segments spans residues 16-36, 38-58, and 69-89; these read QGSM…FEVI, MVVA…TLSG, and LFII…VLAA. The interval 38-133 is hydrophobic; the sequence is MVVASVASVV…IIPESIKPSN (96 aa). 3 tandem repeats follow at residues 115 to 124, 125 to 134, and 135 to 144. A 3 X 10 AA tandem repeats of I-P-E-[SG]-I-K-P-S-N-[IV] region spans residues 115-144; it reads IPESIKPSNIIPESIKPSNIIPEGIKPSNI. The tract at residues 158-377 is disordered; the sequence is KIKAKKEEKS…SSHGSGGKHI (220 aa). 2 stretches are compositionally biased toward basic and acidic residues: residues 162–185 and 195–231; these read KKEE…KGED and DEDK…EGKH. A 2-1 repeat occupies 196–202; that stretch reads EDKHGSG. Residues 196 to 202 form a 2.1 repeat; sequence EDKHGSG. A 3 X 6 AA tandem repeats of E-[SD]-[KT]-H-G-[KS]-G region spans residues 196–222; the sequence is EDKHGSGAKHGKGESKHGKGESTHGKG. The 2-2; truncated repeat unit spans residues 204-208; it reads KHGKG. 7 repeat units span residues 209-215, 216-222, 230-247, 260-277, 278-295, 296-313, and 355-359. Residues 230–313 are 4 X 18 AA tandem repeats of K-H-E-S-G-G-[SA]-[PSA]-M-G-G-G-K-H-G-S-[GE]-G; it reads KHGSGGSSMG…MGGGKHGSGG (84 aa). Residues 232–244 are compositionally biased toward gly residues; the sequence is GSGGSSMGGGKHG. Residues 247–263 are compositionally biased toward basic and acidic residues; sequence GKHETGGKHGSGGKHES. 2 stretches are compositionally biased toward gly residues: residues 280–292 and 302–314; these read GSGG…GKHG and SAMG…SGGK. Low complexity predominate over residues 350–369; it reads SSTSESSDGSSDGSSSDGSS. The segment at 355–368 is 3 X 5 AA tandem repeats of S-S-D-G-S; that stretch reads SSDGSSDGSSSDGS. One copy of the 4-2; truncated repeat lies at 360–363; sequence SDGS. The stretch at 364–368 is one 4-3 repeat; sequence SSDGS.

This sequence belongs to the oleosin family. The full-length protein is found in the tapetal lipid bodies of immature anthers, the proteolytically cleaved C-terminal product is found on the coats of pollen grains. No expression is detected in other flower organs, siliques or seedlings.

It is found in the lipid droplet. The protein localises to the membrane. In terms of biological role, many of the major pollen coat proteins are derived from endoproteolytic cleavage of oleosin-like proteins. This is Oleosin-B4 from Brassica napus (Rape).